The sequence spans 240 residues: Urease accessory protein UreF (240 aa).

This sequence belongs to the UreF family. In terms of assembly, ureD, UreF and UreG form a complex that acts as a GTP-hydrolysis-dependent molecular chaperone, activating the urease apoprotein by helping to assemble the nickel containing metallocenter of UreC. The UreE protein probably delivers the nickel.

The protein localises to the cytoplasm. Its function is as follows. Required for maturation of urease via the functional incorporation of the urease nickel metallocenter. The protein is Urease accessory protein UreF of Rhodopseudomonas palustris (strain TIE-1).